The primary structure comprises 329 residues: Acetoacetyl CoA synthase NphT7 (329 aa).

Active-site residues include cysteine 115, histidine 256, and asparagine 286.

The protein belongs to the thiolase-like superfamily. FabH family. Homodimer.

The protein localises to the cytoplasm. The enzyme catalyses malonyl-CoA + acetyl-CoA + H(+) = acetoacetyl-CoA + CO2 + CoA. It functions in the pathway metabolic intermediate biosynthesis; (R)-mevalonate biosynthesis. Catalyzes the condensation of acetyl-CoA and malonyl-CoA to form acetoacetyl-CoA and CoA. Does not accept malonyl-[acyl-carrier-protein] as a substrate. Can also convert malonyl-CoA into acetyl-CoA via decarboxylation of malonyl-CoA. This is Acetoacetyl CoA synthase NphT7 (nphT7) from Streptomyces sp. (strain CL190).